A 224-amino-acid chain; its full sequence is Ribonuclease 3 (224 aa).

An RNase III domain is found at 4–126; it reads LDRLQRQISY…IIGAISLDSS (123 aa). Glu39 is a Mg(2+) binding site. Residue Asp43 is part of the active site. Mg(2+) is bound by residues Asp112 and Glu115. Residue Glu115 is part of the active site. Residues 153–223 enclose the DRBM domain; sequence DPKTRLQEYL…AEQILTALEI (71 aa).

This sequence belongs to the ribonuclease III family. In terms of assembly, homodimer. Mg(2+) serves as cofactor.

Its subcellular location is the cytoplasm. The catalysed reaction is Endonucleolytic cleavage to 5'-phosphomonoester.. Functionally, digests double-stranded RNA. Involved in the processing of primary rRNA transcript to yield the immediate precursors to the large and small rRNAs (23S and 16S). Processes some mRNAs, and tRNAs when they are encoded in the rRNA operon. Processes pre-crRNA and tracrRNA of type II CRISPR loci if present in the organism. The polypeptide is Ribonuclease 3 (Mannheimia succiniciproducens (strain KCTC 0769BP / MBEL55E)).